The sequence spans 360 residues: GTPase Obg (360 aa).

Residues 1 to 156 enclose the Obg domain; that stretch reads MFVDSVEIII…KCVRLELKLI (156 aa). Positions 157–360 constitute an OBG-type G domain; it reads ADIGLVGFPN…LKFVLLKALP (204 aa). GTP contacts are provided by residues 163–170, 188–192, 210–213, 279–282, and 341–343; these read GFPNAGKS, FTTLV, DIPG, NKCD, and SAV. Ser170 and Thr190 together coordinate Mg(2+).

The protein belongs to the TRAFAC class OBG-HflX-like GTPase superfamily. OBG GTPase family. Monomer. Mg(2+) serves as cofactor.

It is found in the cytoplasm. An essential GTPase which binds GTP, GDP and possibly (p)ppGpp with moderate affinity, with high nucleotide exchange rates and a fairly low GTP hydrolysis rate. Plays a role in control of the cell cycle, stress response, ribosome biogenesis and in those bacteria that undergo differentiation, in morphogenesis control. The sequence is that of GTPase Obg from Helicobacter pylori (strain G27).